A 267-amino-acid chain; its full sequence is Interleukin-15 receptor subunit alpha (267 aa).

The first 30 residues, 1-30 (MAPRRARGCRTLGLPALLLLLLLRPPATRG), serve as a signal peptide directing secretion. The 65-residue stretch at 31-95 (ITCPPPMSVE…WTTPSLKCIR (65 aa)) folds into the Sushi domain. Topologically, residues 31–205 (ITCPPPMSVE…VYPQGHSDTT (175 aa)) are extracellular. Cystine bridges form between C33/C75 and C59/C93. The interval 102-178 (QRPAPPSTVT…ESSHGTPSQT (77 aa)) is disordered. Polar residues predominate over residues 108–124 (STVTTAGVTPQPESLSP). A compositionally biased stretch (low complexity) spans 129-145 (PAASSPSSNNTAATTAA). Residue N137 is glycosylated (N-linked (GlcNAc...) asparagine). Over residues 152–165 (LMPSKSPSTGTTEI) the composition is skewed to polar residues. Residues 206 to 228 (VAISTSTVLLCGLSAVSLLACYL) traverse the membrane as a helical segment. Topologically, residues 229–267 (KSRQTPPLASVEMEAMEALPVTWGTSSRDEDLENCSHHL) are cytoplasmic.

The interleukin-15 receptor IL15R is a heterotrimer of IL15RA, IL2RB and IL2RG. IL15RA also self-associates. Interacts with SYK. N-glycosylated and O-glycosylated. Post-translationally, a soluble form (sIL-15RA) arises from proteolytic shedding of the membrane-anchored receptor. It also binds IL-15 and thus interferes with IL-15 binding to the membrane receptor. Expressed in neutrophils (at protein level). Expressed in fetal brain with higher expression in the hippocampus and cerebellum than in cortex and thalamus. Higher levels of soluble sIL-15RA form in comparison with membrane-bound forms is present in all brain structures. Isoforms 1, 3, 4, 5, 6, 7, 8 and 9: Widely expressed.

The protein resides in the membrane. Its subcellular location is the nucleus membrane. The protein localises to the cell surface. It localises to the endoplasmic reticulum membrane. It is found in the golgi apparatus membrane. The protein resides in the cytoplasmic vesicle membrane. Its subcellular location is the secreted. The protein localises to the extracellular space. In terms of biological role, high-affinity receptor for interleukin-15. Can signal both in cis and trans where IL15R from one subset of cells presents IL15 to neighboring IL2RG-expressing cells. In neutrophils, binds and activates kinase SYK in response to IL15 stimulation. In neutrophils, required for IL15-induced phagocytosis in a SYK-dependent manner. Expression of different isoforms may alter or interfere with signal transduction. Its function is as follows. Does not bind IL15. The polypeptide is Interleukin-15 receptor subunit alpha (IL15RA) (Homo sapiens (Human)).